We begin with the raw amino-acid sequence, 196 residues long: Thymidine kinase (196 aa).

ATP-binding positions include 9–16 and 85–88; these read GTMNSGKS and DEAQ. Catalysis depends on E86, which acts as the Proton acceptor. Residues C143, C146, C180, and H183 each coordinate Zn(2+).

It belongs to the thymidine kinase family. As to quaternary structure, homotetramer.

It is found in the cytoplasm. The enzyme catalyses thymidine + ATP = dTMP + ADP + H(+). In Streptococcus thermophilus (strain CNRZ 1066), this protein is Thymidine kinase.